A 354-amino-acid chain; its full sequence is Methylthioribose-1-phosphate isomerase (354 aa).

Asp246 (proton donor) is an active-site residue.

Belongs to the eIF-2B alpha/beta/delta subunits family. MtnA subfamily.

It is found in the cytoplasm. The protein resides in the nucleus. It catalyses the reaction 5-(methylsulfanyl)-alpha-D-ribose 1-phosphate = 5-(methylsulfanyl)-D-ribulose 1-phosphate. It participates in amino-acid biosynthesis; L-methionine biosynthesis via salvage pathway; L-methionine from S-methyl-5-thio-alpha-D-ribose 1-phosphate: step 1/6. Functionally, catalyzes the interconversion of methylthioribose-1-phosphate (MTR-1-P) into methylthioribulose-1-phosphate (MTRu-1-P). The sequence is that of Methylthioribose-1-phosphate isomerase (mri1) from Xenopus tropicalis (Western clawed frog).